The chain runs to 794 residues: MTTIDTLATCTQQNRDAVYTLLRRYFTANRTLLLQSDLREGLLQTEQDCGQSDMLRAFVFRLQEGIFSSPWAYLALRPEIAKWEFMRIHQEHLIPEKLTISEFLKFKETVVKGEATESVLEVDFGPFNRGFPRLKESRSIGQGVIFLNRKLSSEMFSRIEAGHTSLLHFLGVHAIEGQQLMFSNNSHDIHAVRNQLRQALEMLETLDGTTPWIELAPKMNQLGFAPGWGHNANRVAETMNMLMDILEAPSPSALEEFLACIPMISRLLILSPHGYFGQDNVLGLPDTGGQVVYILDQVRALEKEMHDRLQLQGVQVEPKILIVTRLIPDAGDTTCNQRLEKVSGCTNTWILRVPFRKHNGEIIPHWISRFEIWPHLEIFAGDVEREALAELGGHPDLIIGNYSDGNLVATLLSRRLGVTQCNIAHALEKTKYLHSDIYWQENEDKYHFSCQYTADLLAMNSADFIVTSTYQEIAGTREAEGQYESYQAFSMPDLYRVIHGIDLFDPKFNIVSPGANADIYFPYSDPNRRLHSLIPEIESLIFDDATNLPARGYLQDPDKPLIFTMARLDRIKNITGLVELYAASPRLRSLANLVIVGGKIDPQHSSDHEEQEQIHRMHQLMDEHELDQQVRWLGMRLDKNLAGELYRYIADKRGIFVQPALFEAFGLTIIEAMASGLPTFATRYGGPLEIIQNNRSGFHIDPNQGAATADLIADFFEKNLENPQEWERISQGALDRVASRYTWKLYAERMMTLSRIYGFWKFVSGLEREETDRYLNMFYHLQFRPLANRLAHEI.

The interval 263–742 is GT-B glycosyltransferase; that stretch reads MISRLLILSP…ALDRVASRYT (480 aa).

This sequence belongs to the glycosyltransferase 1 family. Homotetramer.

The enzyme catalyses an NDP-alpha-D-glucose + D-fructose = a ribonucleoside 5'-diphosphate + sucrose + H(+). It catalyses the reaction ADP-alpha-D-glucose + D-fructose = sucrose + ADP + H(+). Its activity is regulated as follows. Inhibited by GDP over 10 mM and by over 2 mM MgCl(2). In terms of biological role, catalyzes the reversible conversion of sucrose and a nucleotide disphosphate (NDP) into fructose and NDP-glucose; although the reaction is freely reversible in vitro, the physiological reaction seems to be sucrose cleavage. Unlike characterized plant enzymes prefers ADP as a cosubstrate, whereas plants prefer UDP. The KM for sucrose is 8-fold lower in the presence of ADP than UDP. Its preference for ADP over UDP suggests it may directly link sucrose and glycogen metabolism. In Nitrosomonas europaea (strain ATCC 19718 / CIP 103999 / KCTC 2705 / NBRC 14298), this protein is Sucrose synthase (ss2).